The sequence spans 1562 residues: NAC-alpha domain-containing protein 1 (1562 aa).

The span at 1–13 (MPGEAARAELLLP) shows a compositional bias: low complexity. Disordered regions lie at residues 1 to 24 (MPGEAARAELLLPEADRPGPRTDL), 56 to 110 (FLPS…TEAP), 131 to 226 (SPRA…ADGD), 249 to 288 (SGWGLSPQGSMVDERELHPAGTPEPPSSESSLSADSSSSW), 327 to 365 (TPLSPEEEEEEAVADPDPGGDLAGEGEEDSTSASFLQSL), 381 to 458 (RDDT…GAYL), 503 to 941 (TPQA…EPLA), and 953 to 1423 (GCAP…AMSK). Residues 195-208 (GDARDSEAELRDEL) show a composition bias toward basic and acidic residues. Over residues 275–287 (SSESSLSADSSSS) the composition is skewed to low complexity. Residues 331–340 (PEEEEEEAVA) show a composition bias toward acidic residues. Over residues 385 to 397 (SAASSDSDSASYA) the composition is skewed to low complexity. 2 stretches are compositionally biased toward polar residues: residues 449–458 (PQTSDRGAYL) and 550–564 (QEETSLTLCPDSPQN). Residues 992 to 1007 (PAALDQVQQDDPQPAA) are compositionally biased toward low complexity. Residues 1048–1074 (PGREACLEARAHTGDGAKPDSPQKETL) show a composition bias toward basic and acidic residues. Ser1068 carries the post-translational modification Phosphoserine. Low complexity-rich tracts occupy residues 1172–1182 (APTSAPTSQQP) and 1231–1241 (APGTLAGAALP). Over residues 1254–1264 (PQEDSVEDEEP) the composition is skewed to acidic residues. Composition is skewed to low complexity over residues 1265 to 1284 (PGSLGLPPPQAGVQPAAAAV), 1298 to 1308 (SLSPHSPLLSP), and 1335 to 1344 (QSPAGPQGLS). Acidic residues predominate over residues 1348 to 1357 (QQEDEDSLEE). Ser1354 carries the post-translational modification Phosphoserine. Residues 1411-1476 (SRSEKKARKA…AKIEDLSQQV (66 aa)) enclose the NAC-A/B domain.

This sequence belongs to the NAC-alpha family.

Its subcellular location is the cytoplasm. The protein resides in the nucleus. Its function is as follows. May prevent inappropriate targeting of non-secretory polypeptides to the endoplasmic reticulum (ER). May bind to nascent polypeptide chains as they emerge from the ribosome and block their interaction with the signal recognition particle (SRP), which normally targets nascent secretory peptides to the ER. May also reduce the inherent affinity of ribosomes for protein translocation sites in the ER membrane (M sites). This chain is NAC-alpha domain-containing protein 1 (NACAD), found in Homo sapiens (Human).